A 118-amino-acid polypeptide reads, in one-letter code: Small ribosomal subunit protein uS13 (118 aa).

The disordered stretch occupies residues 94–118; it reads GLPVRGQRTKTNARTRKGPRKPIKK.

This sequence belongs to the universal ribosomal protein uS13 family. As to quaternary structure, part of the 30S ribosomal subunit. Forms a loose heterodimer with protein S19. Forms two bridges to the 50S subunit in the 70S ribosome.

Located at the top of the head of the 30S subunit, it contacts several helices of the 16S rRNA. In the 70S ribosome it contacts the 23S rRNA (bridge B1a) and protein L5 of the 50S subunit (bridge B1b), connecting the 2 subunits; these bridges are implicated in subunit movement. Contacts the tRNAs in the A and P-sites. This Haemophilus ducreyi (strain 35000HP / ATCC 700724) protein is Small ribosomal subunit protein uS13.